Consider the following 329-residue polypeptide: N-acetylmuramoyl-L-alanine amidase sle1 (329 aa).

Residues 1-26 (MNKKILATAVLGTGALSTLFAHQAEA) form the signal peptide. LysM domains are found at residues 28-71 (TTHT…VLKV), 88-131 (STYT…QLKV), and 152-195 (STYT…KLRV). The Peptidase C51 domain maps to 205 to 329 (STRSAQSTYY…YQVRNYKFIH (125 aa)).

The protein resides in the secreted. It localises to the cell surface. It catalyses the reaction Hydrolyzes the link between N-acetylmuramoyl residues and L-amino acid residues in certain cell-wall glycopeptides.. Its function is as follows. Peptidoglycan hydrolase involved in the splitting of the septum during cell division. The protein is N-acetylmuramoyl-L-alanine amidase sle1 (sle1) of Staphylococcus haemolyticus (strain JCSC1435).